The chain runs to 364 residues: MGSASGSAERTQMGEDEACSFAMTITSGSVPPMVLKAVIELDVLEIIKRAGPGAHLSPAEIAAQLPTTNPGAAAMLDRMLRLLASYDVLSYSLHTLPDGRVERLYGLAPVCQFLTNNEDGVTLSALSLMNQDKVLMESWYHLKDAVLDGGIPFNKAYGMTAFEYHGTDPRFNKVFNNGMSNHSTITMKKLLENYKGFEGVSTLVDVGGGTGATLNMIISKHPTIKGINFDLPHVIEDAPTYPGVEHIGGDMFVSVPKGDAIFMKWICHDWSDEHCLRFLKNCYAALADHGKVIVCEYILPVAPETNHAARTVFHVDAIMLAHNPGGKERTEQEFESLAKGAGFEGFRVACSAYGTKVMEFLKKN.

Residues serine 183, glycine 207, aspartate 230, aspartate 250, and lysine 264 each contribute to the S-adenosyl-L-homocysteine site. Residue aspartate 230 coordinates S-adenosyl-L-methionine. Histidine 268 acts as the Proton acceptor in catalysis.

This sequence belongs to the class I-like SAM-binding methyltransferase superfamily. Cation-independent O-methyltransferase family. In terms of assembly, homodimer.

The catalysed reaction is dopamine + S-adenosyl-L-methionine = 3-methoxytyramine + S-adenosyl-L-homocysteine + H(+). The enzyme catalyses 3,4-dihydroxy-5-methoxyphenethylamine + S-adenosyl-L-methionine = 4-hydroxy-3,5-dimethoxyphenethylamine + S-adenosyl-L-homocysteine + H(+). The protein operates within aromatic compound metabolism. Its pathway is alkaloid biosynthesis. Functionally, O-methyltransferase participating in the biosynthesis of natural products derived from phenylethylamine, including mescaline, a natural hallucinogen potentially used in psychotherapeutic treatments. Catalyzes the O-methylation of mescaline meta hydroxyl groups, using dopamine and 3,4-dihydroxy-5-methoxyphenethylamine as substrates. The protein is O-methyltransferase 1 of Lophophora williamsii (Peyote).